A 475-amino-acid chain; its full sequence is Polyphosphate:AMP phosphotransferase (475 aa).

PPK2 stretches follow at residues 18 to 222 (LDLI…LTAL) and 256 to 472 (ANYK…KADR).

It belongs to the polyphosphate kinase 2 (PPK2) family. Class II subfamily. In terms of assembly, homodimer and homotetramer. Mg(2+) serves as cofactor.

It catalyses the reaction [phosphate](n) + ADP = [phosphate](n+1) + AMP. In terms of biological role, uses inorganic polyphosphate (polyP) as a donor to convert AMP to ADP. Can also use GMP, UMP, CMP, TMP or deoxyribonucleoside monophosphates, with lower efficiency. Cannot use low-molecular weight polyP as donors. Can also catalyze the synthesis of polyP from ADP or GDP, with lower efficiency. This Acinetobacter johnsonii protein is Polyphosphate:AMP phosphotransferase.